The chain runs to 487 residues: Bifunctional protein GlmU (487 aa).

Positions 1-235 are pyrophosphorylase; sequence MSHSPTPLAA…PEEASGVNDR (235 aa). UDP-N-acetyl-alpha-D-glucosamine is bound by residues 13–16, lysine 27, glutamine 82, 87–88, 110–112, glycine 147, glutamate 162, asparagine 177, and asparagine 233; these read LAAG, GT, and SGD. A Mg(2+)-binding site is contributed by aspartate 112. Asparagine 233 contacts Mg(2+). The segment at 236 to 256 is linker; sequence EELARAGRVLLRRRASELMRS. An N-acetyltransferase region spans residues 257–487; that stretch reads GVTIEDPERF…ADSPRGGRAS (231 aa). 2 residues coordinate UDP-N-acetyl-alpha-D-glucosamine: arginine 339 and lysine 357. Histidine 369 serves as the catalytic Proton acceptor. Residues tyrosine 372 and asparagine 383 each coordinate UDP-N-acetyl-alpha-D-glucosamine. Acetyl-CoA is bound by residues alanine 386, 392 to 393, serine 411, alanine 429, and arginine 446; that span reads NY. Residues 453 to 487 are disordered; that stretch reads EGWVARRKAEAQNKGAAEAAPAPSPADSPRGGRAS. Residues 468–481 are compositionally biased toward low complexity; that stretch reads AAEAAPAPSPADSP.

The protein in the N-terminal section; belongs to the N-acetylglucosamine-1-phosphate uridyltransferase family. In the C-terminal section; belongs to the transferase hexapeptide repeat family. As to quaternary structure, homotrimer. It depends on Mg(2+) as a cofactor.

The protein localises to the cytoplasm. The enzyme catalyses alpha-D-glucosamine 1-phosphate + acetyl-CoA = N-acetyl-alpha-D-glucosamine 1-phosphate + CoA + H(+). The catalysed reaction is N-acetyl-alpha-D-glucosamine 1-phosphate + UTP + H(+) = UDP-N-acetyl-alpha-D-glucosamine + diphosphate. The protein operates within nucleotide-sugar biosynthesis; UDP-N-acetyl-alpha-D-glucosamine biosynthesis; N-acetyl-alpha-D-glucosamine 1-phosphate from alpha-D-glucosamine 6-phosphate (route II): step 2/2. It functions in the pathway nucleotide-sugar biosynthesis; UDP-N-acetyl-alpha-D-glucosamine biosynthesis; UDP-N-acetyl-alpha-D-glucosamine from N-acetyl-alpha-D-glucosamine 1-phosphate: step 1/1. It participates in bacterial outer membrane biogenesis; LPS lipid A biosynthesis. Catalyzes the last two sequential reactions in the de novo biosynthetic pathway for UDP-N-acetylglucosamine (UDP-GlcNAc). The C-terminal domain catalyzes the transfer of acetyl group from acetyl coenzyme A to glucosamine-1-phosphate (GlcN-1-P) to produce N-acetylglucosamine-1-phosphate (GlcNAc-1-P), which is converted into UDP-GlcNAc by the transfer of uridine 5-monophosphate (from uridine 5-triphosphate), a reaction catalyzed by the N-terminal domain. In Anaeromyxobacter sp. (strain Fw109-5), this protein is Bifunctional protein GlmU.